We begin with the raw amino-acid sequence, 373 residues long: 3 beta-hydroxysteroid dehydrogenase/Delta 5--&gt;4-isomerase (373 aa).

Catalysis depends on tyrosine 155, which acts as the Proton acceptor. Lysine 159 lines the NAD(+) pocket. Residues isoleucine 288–isoleucine 308 traverse the membrane as a helical segment.

The protein belongs to the 3-beta-HSD family.

Its subcellular location is the endoplasmic reticulum membrane. It is found in the mitochondrion membrane. The enzyme catalyses a 3beta-hydroxy-Delta(5)-steroid + NAD(+) = a 3-oxo-Delta(5)-steroid + NADH + H(+). It catalyses the reaction a 3-oxo-Delta(5)-steroid = a 3-oxo-Delta(4)-steroid. The protein operates within lipid metabolism; steroid biosynthesis. Its function is as follows. 3-beta-HSD is a bifunctional enzyme, that catalyzes the oxidative conversion of Delta(5)-ene-3-beta-hydroxy steroid, and the oxidative conversion of ketosteroids. The 3-beta-HSD enzymatic system plays a crucial role in the biosynthesis of all classes of hormonal steroids. The chain is 3 beta-hydroxysteroid dehydrogenase/Delta 5--&gt;4-isomerase (HSD3B) from Bos taurus (Bovine).